A 247-amino-acid chain; its full sequence is 3-deoxy-manno-octulosonate cytidylyltransferase (247 aa).

The protein belongs to the KdsB family.

The protein resides in the cytoplasm. It catalyses the reaction 3-deoxy-alpha-D-manno-oct-2-ulosonate + CTP = CMP-3-deoxy-beta-D-manno-octulosonate + diphosphate. The protein operates within nucleotide-sugar biosynthesis; CMP-3-deoxy-D-manno-octulosonate biosynthesis; CMP-3-deoxy-D-manno-octulosonate from 3-deoxy-D-manno-octulosonate and CTP: step 1/1. It participates in bacterial outer membrane biogenesis; lipopolysaccharide biosynthesis. Its function is as follows. Activates KDO (a required 8-carbon sugar) for incorporation into bacterial lipopolysaccharide in Gram-negative bacteria. The protein is 3-deoxy-manno-octulosonate cytidylyltransferase of Afipia carboxidovorans (strain ATCC 49405 / DSM 1227 / KCTC 32145 / OM5) (Oligotropha carboxidovorans).